A 298-amino-acid polypeptide reads, in one-letter code: MTSPSAPLTGSIVALVTPMHDDGSVDYPALRKLIDWHIAEGTDCIGVVGTTGESPTVNVEEHCEIIRVSVEQAAKRVPIMAGCGANSTAEAIELARFAKKVGADSQLQVVPYYNKPTQEGQYRHFKAIAEAVGDLPMVLYNVPGRSVADMQHETVLRLTQVPGIVGIKEATGNIERAQWLIRDVPKGFAVYSGDDPTAVALMLCGGQGNISVTANVAPRLMHELCVAALAGDTRRAMEIQFRLMPVHKQLFVEANPIPVKWAVQRMGLCGGALRLPMTPLSQGNEAVVEAALRAAGLL.

Residue threonine 51 coordinates pyruvate. The active-site Proton donor/acceptor is the tyrosine 140. The active-site Schiff-base intermediate with substrate is lysine 168. Isoleucine 210 contributes to the pyruvate binding site.

This sequence belongs to the DapA family. Homotetramer; dimer of dimers.

It is found in the cytoplasm. It carries out the reaction L-aspartate 4-semialdehyde + pyruvate = (2S,4S)-4-hydroxy-2,3,4,5-tetrahydrodipicolinate + H2O + H(+). It functions in the pathway amino-acid biosynthesis; L-lysine biosynthesis via DAP pathway; (S)-tetrahydrodipicolinate from L-aspartate: step 3/4. Catalyzes the condensation of (S)-aspartate-beta-semialdehyde [(S)-ASA] and pyruvate to 4-hydroxy-tetrahydrodipicolinate (HTPA). This is 4-hydroxy-tetrahydrodipicolinate synthase from Acidovorax sp. (strain JS42).